The primary structure comprises 346 residues: Elongation factor Ts (346 aa).

The interval 80 to 83 is involved in Mg(2+) ion dislocation from EF-Tu; that stretch reads TDFV.

It belongs to the EF-Ts family.

It localises to the cytoplasm. Functionally, associates with the EF-Tu.GDP complex and induces the exchange of GDP to GTP. It remains bound to the aminoacyl-tRNA.EF-Tu.GTP complex up to the GTP hydrolysis stage on the ribosome. The chain is Elongation factor Ts from Streptococcus thermophilus (strain CNRZ 1066).